Here is a 260-residue protein sequence, read N- to C-terminus: Triosephosphate isomerase (260 aa).

11–13 contacts substrate; sequence NWK. Residue His-103 is the Electrophile of the active site. The active-site Proton acceptor is the Glu-175. Substrate-binding positions include Gly-181, Ser-220, and 241 to 242; that span reads GG.

It belongs to the triosephosphate isomerase family. In terms of assembly, homodimer.

It is found in the cytoplasm. The catalysed reaction is D-glyceraldehyde 3-phosphate = dihydroxyacetone phosphate. The protein operates within carbohydrate biosynthesis; gluconeogenesis. Its pathway is carbohydrate degradation; glycolysis; D-glyceraldehyde 3-phosphate from glycerone phosphate: step 1/1. Functionally, involved in the gluconeogenesis. Catalyzes stereospecifically the conversion of dihydroxyacetone phosphate (DHAP) to D-glyceraldehyde-3-phosphate (G3P). The chain is Triosephosphate isomerase from Shewanella loihica (strain ATCC BAA-1088 / PV-4).